Here is a 339-residue protein sequence, read N- to C-terminus: uncharacterized protein (339 aa).

Residues Ile-54, Lys-78, Asp-101, Asn-128, Tyr-213, and Lys-217 each coordinate NADP(+). The active-site Proton donor is the Tyr-213. Lys-217 acts as the Lowers pKa of active site Tyr in catalysis.

This sequence belongs to the short-chain dehydrogenases/reductases (SDR) family.

This is an uncharacterized protein from Schizosaccharomyces pombe (strain 972 / ATCC 24843) (Fission yeast).